Reading from the N-terminus, the 63-residue chain is Large ribosomal subunit protein bL28 (63 aa).

It belongs to the bacterial ribosomal protein bL28 family.

The chain is Large ribosomal subunit protein bL28 from Desulfitobacterium hafniense (strain DSM 10664 / DCB-2).